Here is a 331-residue protein sequence, read N- to C-terminus: Nucleotide sugar transporter SLC35B4 (331 aa).

The next 11 helical transmembrane spans lie at 4–24 (ALAV…LELL), 30–50 (GCGN…GFLF), 59–79 (PAIP…VSVV), 92–112 (LHMI…IIIL), 117–137 (SIFK…CTFM), 153–173 (GFQA…ALLM), 201–221 (ALPL…AVLF), 229–249 (IPVI…NIIT), 251–267 (YVCI…CASL), 268–288 (TVTL…ILYF), and 291–311 (PFTL…LMYT). The Mediates endoplasmic reticulum retention signature appears at 326–331 (KDSKKN).

Belongs to the nucleotide-sugar transporter family. SLC35B subfamily.

The protein resides in the endoplasmic reticulum membrane. It catalyses the reaction UDP-N-acetyl-alpha-D-glucosamine(in) + UDP-alpha-D-glucuronate(out) = UDP-N-acetyl-alpha-D-glucosamine(out) + UDP-alpha-D-glucuronate(in). It carries out the reaction UDP-alpha-D-xylose(in) + UDP-alpha-D-glucuronate(out) = UDP-alpha-D-xylose(out) + UDP-alpha-D-glucuronate(in). Antiporter that transports nucleotide sugars across the endoplasmic reticulum (ER) membrane in exchange for another nucleotide sugar. May couple UDP-alpha-D-glucuronate (UDP-GlcA) or UDP-alpha-D-xylose (UDP-Xyl) efflux to UDP-alpha-D-glucuronate (UDP-GlcA) influx into the ER lumen, which in turn stimulates glucuronidation and excretion of endobiotics and xenobiotics. The polypeptide is Nucleotide sugar transporter SLC35B4 (SLC35B4) (Pongo abelii (Sumatran orangutan)).